The sequence spans 228 residues: UPF0758 protein CTC_02075 (228 aa).

An MPN domain is found at 106 to 228 (NITNPKDAAY…YISLKEKDIL (123 aa)). The Zn(2+) site is built by His177, His179, and Asp190. The short motif at 177-190 (HNHPSGDTTPSKED) is the JAMM motif element.

It belongs to the UPF0758 family.

The protein is UPF0758 protein CTC_02075 of Clostridium tetani (strain Massachusetts / E88).